We begin with the raw amino-acid sequence, 609 residues long: Replication protein E1 (609 aa).

The short motif at 81-83 (KRK) is the Nuclear localization signal element. A phosphoserine; by host mark is found at Ser-87 and Ser-94. A Nuclear export signal motif is present at residues 93-102 (LSPRLQSITI). Residues 149 to 312 (QGAKGLGIVK…TMINHQSAEA (164 aa)) are DNA-binding region. An SF3 helicase domain is found at 411–561 (INFIRFLDVF…FPFDSNNKPQ (151 aa)). 437-444 (GPPDTGKS) provides a ligand contact to ATP. Residue Lys-518 forms a Glycyl lysine isopeptide (Lys-Gly) (interchain with G-Cter in SUMO) linkage. The tract at residues 584 to 609 (DQEDEGDDGHTQRSFQCTAREPNGHL) is disordered.

It belongs to the papillomaviridae E1 protein family. As to quaternary structure, can form hexamers. Interacts with E2 protein; this interaction increases E1 DNA binding specificity. Interacts with host DNA polymerase subunit POLA2. Interacts with host single stranded DNA-binding protein RPA1. Interacts with host TOP1; this interaction stimulates the enzymatic activity of TOP1. In terms of processing, phosphorylated. Sumoylated.

It localises to the host nucleus. It carries out the reaction Couples ATP hydrolysis with the unwinding of duplex DNA by translocating in the 3'-5' direction.. It catalyses the reaction ATP + H2O = ADP + phosphate + H(+). In terms of biological role, ATP-dependent DNA 3'-5' helicase required for initiation of viral DNA replication. It forms a complex with the viral E2 protein. The E1-E2 complex binds to the replication origin which contains binding sites for both proteins. During the initial step, a dimer of E1 interacts with a dimer of protein E2 leading to a complex that binds the viral origin of replication with high specificity. Then, a second dimer of E1 displaces the E2 dimer in an ATP-dependent manner to form the E1 tetramer. Following this, two E1 monomers are added to each half of the site, which results in the formation of two E1 trimers on the viral ori. Subsequently, two hexamers will be created. The double hexamer acts as a bi-directional helicase machinery and unwinds the viral DNA and then recruits the host DNA polymerase to start replication. In Human papillomavirus 37, this protein is Replication protein E1.